Here is a 134-residue protein sequence, read N- to C-terminus: RxLR effector protein Avh238 (134 aa).

Positions 1-21 (MRGVFFVAVAVAIFARSSAEA) are cleaved as a signal peptide. The short motif at 44–68 (RFLRVADPEDDDLAAPADDGKTEER) is the RxLR-dEER element. The tract at residues 49–70 (ADPEDDDLAAPADDGKTEERAP) is disordered. The span at 61–70 (DDGKTEERAP) shows a compositional bias: basic and acidic residues.

This sequence belongs to the RxLR effector family. Interacts with host 1-aminocyclopropane-1-carboxylate synthases ACS1, ACS2, ACS3, ACS10 and ACS12.

The protein resides in the secreted. It localises to the host cytoplasm. Its subcellular location is the host nucleus. Functionally, effector that suppresses plant defense responses during the early stages of pathogen infection. Suppresses cell death induced by effectors and PAMPs in plant hosts. Is able to induced cell death in tomato, tobacco, eggplant, and potato, but not in A.thaliana. Interacts with and destabilizes host 1-aminocyclopropane-1-carboxylate synthases. By suppressing type2 ACS-catalyzed ethylene biosynthesis, Avh238 facilitates Phytophthora infection. This chain is RxLR effector protein Avh238 (Avh238), found in Phytophthora sojae (strain P6497) (Soybean stem and root rot agent).